Consider the following 935-residue polypeptide: Myocardin (935 aa).

Positions 12-27 match the MEF2C-binding motif; that stretch reads IRRKFRSVLQLRLQQR. RPEL repeat units follow at residues 18–43, 62–87, and 106–131; these read SVLQ…PPLK, DSLR…QAST, and DDLN…PMDS. Positions 37 to 73 are disordered; the sequence is GLIPPLKGPTEFHDPRKQLDSAKTEDSLRRKGRNRSD. The span at 46 to 73 shows a compositional bias: basic and acidic residues; it reads TEFHDPRKQLDSAKTEDSLRRKGRNRSD. Residues 153 to 201 are HDAC5-binding; it reads FEDDSSRDGLSPDQARSEDPQGSTGSTPDIKSTEAPLDTIQDLTPGSES. The tract at residues 155–283 is disordered; sequence DDSSRDGLSP…SPPPMDSAYA (129 aa). Composition is skewed to polar residues over residues 172 to 182 and 206 to 216; these read PQGSTGSTPDI and AASQPGNQSDP. A compositionally biased stretch (basic residues) spans 244–261; sequence NRHKKPKDPKPKVKKLKY. Residues 287-322 are a coiled coil; sequence QQQQLFLQLQILSQQQQQQQQQQQQQQQQQQQQQRF. The tract at residues 337-378 is disordered; it reads EQMARNPNPSSTPLSNTPLSPVKNSISGQTGVSSLKPGPLPP. The span at 342–357 shows a compositional bias: low complexity; sequence NPNPSSTPLSNTPLSP. Residues 358-369 show a composition bias toward polar residues; the sequence is VKNSISGQTGVS. One can recognise an SAP domain in the interval 380–414; it reads LDDLKVSELRQQLRIRGLPVSGTKTALVDRLRPFQ. A phosphoserine; by GSK3-beta mark is found at Ser-454, Ser-458, Ser-462, and Ser-466. The disordered stretch occupies residues 498-518; sequence ESLLSSLNGGSGPSEPDGLDS. Positions 519–563 form a coiled coil; it reads EKDKMLVEKQKVINQLTWKLRQEQRQVEELRMQLQKQKSSCSDQK. The segment at 579-605 is disordered; sequence SCPFAPQQASGKGQGHSSDSPPPACET. A compositionally biased stretch (polar residues) spans 585–597; the sequence is QQASGKGQGHSSD. 4 positions are modified to phosphoserine; by GSK3-beta: Ser-624, Ser-628, Ser-632, and Ser-636. The interval 654–731 is disordered; it reads NNHYFLASSS…DAVKQQMTRS (78 aa). Polar residues predominate over residues 660 to 691; it reads ASSSGAQRENHGVSSPSSSQGCAQMTGLQSSD. Residues 695–709 show a composition bias toward low complexity; that stretch reads PTFSIPSPTFSKSSS. The segment at 714 to 935 is required for interaction with and ubiquitination by STUB1; the sequence is ITQPPSYEDA…SPMDLHLQQW (222 aa). Ser-812, Ser-859, and Ser-866 each carry phosphoserine; by MAPK1 and MAPK3. Thr-893 carries the phosphothreonine; by MAPK1 and MAPK3 modification.

As to quaternary structure, homodimer. Interacts with MLLT7/FOXO4. Interacts with SRF, its association does not depend on specific DNA sequences for ternary complex formation. Interacts (via C-terminal) with EP300 (via CREB-binding domain). Interacts with HDAC4 and HDAC5. Interacts with MEF2C. Interacts (via C-terminus) with STUB1/CHIP. Interacts with PURB. Ubiquitinated; by STUB1/CHIP at the C-terminus, leading to its degradation by the proteasome. Phosphorylation by GSK3B is required for STUB1/CHIP-mediated ubiquitination. Post-translationally, phosphorylation negatively regulates transcriptional activity. Phosphorylated; by GSK3B. As to expression, expressed in smooth muscle cell-containing tissues. Expressed in the heart. Expressed in the aorta and bladder. Weakly expression in the lung, testis and kidney. Weakly expressed in the stomach. Weakly expressed in the intestine and colon. In terms of tissue distribution, expressed in the heart. Predominantly expressed in cardiac muscle. As to expression, predominantly expressed in smooth muscle cell-rich tissues.

It localises to the nucleus speckle. Functionally, smooth muscle cells (SM) and cardiac muscle cells-specific transcriptional factor which uses the canonical single or multiple CArG boxes DNA sequence. Acts as a cofactor of serum response factor (SRF) with the potential to modulate SRF-target genes. Plays a crucial role in cardiogenesis, urinary bladder development, and differentiation of the smooth muscle cell lineage (myogenesis). Positively regulates the transcription of genes involved in vascular smooth muscle contraction. Its function is as follows. Positively regulates the activation of smooth muscle cell gene promoter regions. In terms of biological role, positively regulates the activation of smooth muscle cell gene promoter regions. Activation of the MYH6 promoter is enhanced in the presence of MEF2C. In Mus musculus (Mouse), this protein is Myocardin (Myocd).